The primary structure comprises 408 residues: ATP phosphoribosyltransferase regulatory subunit (408 aa).

This sequence belongs to the class-II aminoacyl-tRNA synthetase family. HisZ subfamily. In terms of assembly, heteromultimer composed of HisG and HisZ subunits.

Its subcellular location is the cytoplasm. Its pathway is amino-acid biosynthesis; L-histidine biosynthesis; L-histidine from 5-phospho-alpha-D-ribose 1-diphosphate: step 1/9. In terms of biological role, required for the first step of histidine biosynthesis. May allow the feedback regulation of ATP phosphoribosyltransferase activity by histidine. This Thermosynechococcus vestitus (strain NIES-2133 / IAM M-273 / BP-1) protein is ATP phosphoribosyltransferase regulatory subunit.